The sequence spans 110 residues: UPF0122 protein RBAM_015800 (110 aa).

The protein belongs to the UPF0122 family.

Its function is as follows. Might take part in the signal recognition particle (SRP) pathway. This is inferred from the conservation of its genetic proximity to ftsY/ffh. May be a regulatory protein. In Bacillus velezensis (strain DSM 23117 / BGSC 10A6 / LMG 26770 / FZB42) (Bacillus amyloliquefaciens subsp. plantarum), this protein is UPF0122 protein RBAM_015800.